Here is a 93-residue protein sequence, read N- to C-terminus: Small ribosomal subunit protein uS19 (93 aa).

It belongs to the universal ribosomal protein uS19 family.

In terms of biological role, protein S19 forms a complex with S13 that binds strongly to the 16S ribosomal RNA. The protein is Small ribosomal subunit protein uS19 of Rhodococcus erythropolis (strain PR4 / NBRC 100887).